Consider the following 510-residue polypeptide: ATP synthase subunit alpha (510 aa).

Residue Gly-169–Thr-176 coordinates ATP.

Belongs to the ATPase alpha/beta chains family. In terms of assembly, F-type ATPases have 2 components, CF(1) - the catalytic core - and CF(0) - the membrane proton channel. CF(1) has five subunits: alpha(3), beta(3), gamma(1), delta(1), epsilon(1). CF(0) has four main subunits: a(1), b(1), b'(1) and c(9-12).

Its subcellular location is the cell inner membrane. It carries out the reaction ATP + H2O + 4 H(+)(in) = ADP + phosphate + 5 H(+)(out). Produces ATP from ADP in the presence of a proton gradient across the membrane. The alpha chain is a regulatory subunit. This is ATP synthase subunit alpha from Rhodopseudomonas palustris (strain BisB18).